A 61-amino-acid polypeptide reads, in one-letter code: Large ribosomal subunit protein uL30 (61 aa).

Belongs to the universal ribosomal protein uL30 family. As to quaternary structure, part of the 50S ribosomal subunit.

This chain is Large ribosomal subunit protein uL30, found in Maricaulis maris (strain MCS10) (Caulobacter maris).